A 336-amino-acid polypeptide reads, in one-letter code: Galactinol synthase 6 (336 aa).

Lys-106 is an active-site residue. Residues Asp-122, Asp-124, and His-260 each coordinate Mn(2+).

Belongs to the glycosyltransferase 8 family. Galactosyltransferase subfamily. The cofactor is a divalent metal cation.

The protein resides in the cytoplasm. The enzyme catalyses myo-inositol + UDP-alpha-D-galactose = alpha-D-galactosyl-(1-&gt;3)-1D-myo-inositol + UDP + H(+). Galactinol synthase involved in the biosynthesis of raffinose family oligosaccharides (RFOs) that function as osmoprotectants. May promote plant stress tolerance. This Arabidopsis thaliana (Mouse-ear cress) protein is Galactinol synthase 6 (GOLS6).